A 932-amino-acid chain; its full sequence is Protein translocase subunit SecA (932 aa).

ATP-binding positions include glutamine 83, 101-105, and aspartate 491; that span reads GEGKT.

This sequence belongs to the SecA family. As to quaternary structure, monomer and homodimer. Part of the essential Sec protein translocation apparatus which comprises SecA, SecYEG and auxiliary proteins SecDF. Other proteins may also be involved.

The protein localises to the cell inner membrane. The protein resides in the cellular thylakoid membrane. It localises to the cytoplasm. The catalysed reaction is ATP + H2O + cellular proteinSide 1 = ADP + phosphate + cellular proteinSide 2.. Part of the Sec protein translocase complex. Interacts with the SecYEG preprotein conducting channel. Has a central role in coupling the hydrolysis of ATP to the transfer of proteins into and across the cell membrane, serving as an ATP-driven molecular motor driving the stepwise translocation of polypeptide chains across the membrane. Its function is as follows. Probably participates in protein translocation into and across both the cytoplasmic and thylakoid membranes in cyanobacterial cells. In Cyanothece sp. (strain PCC 7425 / ATCC 29141), this protein is Protein translocase subunit SecA.